The primary structure comprises 178 residues: Cytochrome b6-f complex iron-sulfur subunit (178 aa).

Residues Leu20 to Ile42 traverse the membrane as a helical segment. Residues Thr71–Val161 form the Rieske domain. The [2Fe-2S] cluster site is built by Cys107, His109, Cys125, and His128. A disulfide bridge links Cys112 with Cys127.

It belongs to the Rieske iron-sulfur protein family. The 4 large subunits of the cytochrome b6-f complex are cytochrome b6, subunit IV (17 kDa polypeptide, PetD), cytochrome f and the Rieske protein, while the 4 small subunits are PetG, PetL, PetM and PetN. The complex functions as a dimer. [2Fe-2S] cluster is required as a cofactor.

It is found in the cellular thylakoid membrane. It carries out the reaction 2 oxidized [plastocyanin] + a plastoquinol + 2 H(+)(in) = 2 reduced [plastocyanin] + a plastoquinone + 4 H(+)(out). Component of the cytochrome b6-f complex, which mediates electron transfer between photosystem II (PSII) and photosystem I (PSI), cyclic electron flow around PSI, and state transitions. This Synechococcus sp. (strain WH7803) protein is Cytochrome b6-f complex iron-sulfur subunit.